The sequence spans 502 residues: Chromosomal replication initiator protein DnaA (502 aa).

The interval 1 to 112 (MADDLSLGFT…PSTDHIDDNS (112 aa)) is domain I, interacts with DnaA modulators. The interval 113-161 (SSADVLLTDDCGTDTDENYGEPLTGEYQGLPTYFTERPHHTESTVTGGT) is domain II. The domain III, AAA+ region stretch occupies residues 162–378 (SLNRRYTFET…GALIRVTAFA (217 aa)). Glycine 206, glycine 208, lysine 209, and threonine 210 together coordinate ATP. A domain IV, binds dsDNA region spans residues 379–502 (SLNKTAIDKA…TTRIRQRSKR (124 aa)).

The protein belongs to the DnaA family. As to quaternary structure, oligomerizes as a right-handed, spiral filament on DNA at oriC.

It is found in the cytoplasm. Its function is as follows. Plays an essential role in the initiation and regulation of chromosomal replication. ATP-DnaA binds to the origin of replication (oriC) to initiate formation of the DNA replication initiation complex once per cell cycle. Binds the DnaA box (a 9 base pair repeat at the origin) and separates the double-stranded (ds)DNA. Forms a right-handed helical filament on oriC DNA; dsDNA binds to the exterior of the filament while single-stranded (ss)DNA is stabiized in the filament's interior. The ATP-DnaA-oriC complex binds and stabilizes one strand of the AT-rich DNA unwinding element (DUE), permitting loading of DNA polymerase. After initiation quickly degrades to an ADP-DnaA complex that is not apt for DNA replication. Binds acidic phospholipids. This Mycobacterium leprae (strain TN) protein is Chromosomal replication initiator protein DnaA.